We begin with the raw amino-acid sequence, 512 residues long: FAD-dependent monooxygenase prx3 (512 aa).

The signal sequence occupies residues 1 to 19 (MLSLKAFLALSLSIHLSQG). The FAD-binding PCMH-type domain occupies 63–235 (CQTTPTCVFA…TRFDLATFSV (173 aa)). Residue His-100 is modified to Pros-8alpha-FAD histidine. Residues Asn-197, Asn-281, Asn-307, Asn-329, Asn-361, and Asn-477 are each glycosylated (N-linked (GlcNAc...) asparagine).

This sequence belongs to the oxygen-dependent FAD-linked oxidoreductase family.

It functions in the pathway sesquiterpene biosynthesis. Functionally, FAD-dependent monooxygenase; part of the gene cluster that mediates the biosynthesis of PR-toxin, a bicyclic sesquiterpene belonging to the eremophilane class and acting as a mycotoxin. The first step of the pathway is catalyzed by the aristolochene synthase which performs the cyclization of trans,trans-farnesyl diphosphate (FPP) to the bicyclic sesquiterpene aristolochene. Following the formation of aristolochene, the non-oxygenated aristolochene is converted to the trioxygenated intermediate eremofortin B, via 7-epi-neopetasone. This conversion appears to involve three enzymes, a hydroxysterol oxidase-like enzyme, the quinone-oxidase prx3 that forms the quinone-type-structure in the bicyclic nucleus of aristolochene with the C8-oxo group and the C-3 hydroxyl group, and the P450 monooxygenase ORF6 that introduces the epoxide at the double bond between carbons 1 and 2. No monoxy or dioxy-intermediates have been reported to be released to the broth, so these three early oxidative reactions may be coupled together. Eremofortin B is further oxidized by another P450 monooxygenase, that introduces a second epoxide between carbons 7 and 11 prior to acetylation to eremofortin A by the acetyltransferase ORF8. The second epoxidation may be performed by a second P450 monooxygenase. After the acetylation step, eremofortin A is converted to eremofortin C and then to PR-toxin. First the conversion of eremofortin A to eremofortin C proceeds by oxidation of the side chain of the molecule at C-12 and is catalyzed by the short-chain oxidoreductase prx1. The cytochrome P450 monooxygenase ORF6 is probably also involved in this step. The primary alcohol formed at C-12 is finally oxidized by the short-chain alcohol dehydrogenase prx4 that forms PR-toxin. In Penicillium roqueforti (strain FM164), this protein is FAD-dependent monooxygenase prx3.